Reading from the N-terminus, the 274-residue chain is 2,3,4,5-tetrahydropyridine-2,6-dicarboxylate N-succinyltransferase (274 aa).

Residues Arg-107 and Asp-144 each coordinate substrate.

It belongs to the transferase hexapeptide repeat family. Homotrimer.

The protein resides in the cytoplasm. It carries out the reaction (S)-2,3,4,5-tetrahydrodipicolinate + succinyl-CoA + H2O = (S)-2-succinylamino-6-oxoheptanedioate + CoA. It participates in amino-acid biosynthesis; L-lysine biosynthesis via DAP pathway; LL-2,6-diaminopimelate from (S)-tetrahydrodipicolinate (succinylase route): step 1/3. This Paracoccus denitrificans (strain Pd 1222) protein is 2,3,4,5-tetrahydropyridine-2,6-dicarboxylate N-succinyltransferase.